The following is a 610-amino-acid chain: Elongation factor 4 (610 aa).

Residues 15–197 (KSIRNFSIIA…RIINDIPYPK (183 aa)) enclose the tr-type G domain. GTP is bound by residues 27–32 (DHGKST) and 144–147 (NKID).

This sequence belongs to the TRAFAC class translation factor GTPase superfamily. Classic translation factor GTPase family. LepA subfamily.

Its subcellular location is the cell membrane. The enzyme catalyses GTP + H2O = GDP + phosphate + H(+). Required for accurate and efficient protein synthesis under certain stress conditions. May act as a fidelity factor of the translation reaction, by catalyzing a one-codon backward translocation of tRNAs on improperly translocated ribosomes. Back-translocation proceeds from a post-translocation (POST) complex to a pre-translocation (PRE) complex, thus giving elongation factor G a second chance to translocate the tRNAs correctly. Binds to ribosomes in a GTP-dependent manner. This Buchnera aphidicola subsp. Acyrthosiphon pisum (strain APS) (Acyrthosiphon pisum symbiotic bacterium) protein is Elongation factor 4.